Consider the following 220-residue polypeptide: 1-Cys peroxiredoxin A (220 aa).

Positions 4–165 (LTIGDTVPNL…VVRAVDALQT (162 aa)) constitute a Thioredoxin domain. Cys46 serves as the catalytic Cysteine sulfenic acid (-SOH) intermediate. A Bipartite nuclear localization signal motif is present at residues 195–218 (KEKFPQGFDTADLPSGKGYLRFTK).

The protein belongs to the peroxiredoxin family. Prx6 subfamily.

It is found in the nucleus. It localises to the cytoplasm. The enzyme catalyses a hydroperoxide + [thioredoxin]-dithiol = an alcohol + [thioredoxin]-disulfide + H2O. In terms of biological role, thiol-specific peroxidase that catalyzes the reduction of hydrogen peroxide and organic hydroperoxides to water and alcohols, respectively. Seems to contribute to the inhibition of germination during stress. The polypeptide is 1-Cys peroxiredoxin A (Oryza sativa subsp. japonica (Rice)).